Consider the following 445-residue polypeptide: Exodeoxyribonuclease 7 large subunit (445 aa).

The protein belongs to the XseA family. Heterooligomer composed of large and small subunits.

The protein localises to the cytoplasm. It catalyses the reaction Exonucleolytic cleavage in either 5'- to 3'- or 3'- to 5'-direction to yield nucleoside 5'-phosphates.. Bidirectionally degrades single-stranded DNA into large acid-insoluble oligonucleotides, which are then degraded further into small acid-soluble oligonucleotides. The sequence is that of Exodeoxyribonuclease 7 large subunit from Pasteurella multocida (strain Pm70).